The primary structure comprises 126 residues: Aspartate 1-decarboxylase (126 aa).

The active-site Schiff-base intermediate with substrate; via pyruvic acid is serine 25. Serine 25 is modified (pyruvic acid (Ser)). Residue threonine 57 coordinates substrate. The active-site Proton donor is tyrosine 58. 73–75 lines the substrate pocket; that stretch reads GAA.

The protein belongs to the PanD family. In terms of assembly, heterooctamer of four alpha and four beta subunits. Requires pyruvate as cofactor. Post-translationally, is synthesized initially as an inactive proenzyme, which is activated by self-cleavage at a specific serine bond to produce a beta-subunit with a hydroxyl group at its C-terminus and an alpha-subunit with a pyruvoyl group at its N-terminus.

Its subcellular location is the cytoplasm. It catalyses the reaction L-aspartate + H(+) = beta-alanine + CO2. The protein operates within cofactor biosynthesis; (R)-pantothenate biosynthesis; beta-alanine from L-aspartate: step 1/1. Functionally, catalyzes the pyruvoyl-dependent decarboxylation of aspartate to produce beta-alanine. This chain is Aspartate 1-decarboxylase, found in Edwardsiella ictaluri (strain 93-146).